Consider the following 471-residue polypeptide: Transcription initiation factor TFIID subunit 7-like (471 aa).

Disordered stretches follow at residues 1 to 84, 192 to 211, and 328 to 377; these read MERG…RQGT, SPEGEPHSPPEEPVVSTGPT, and EMMG…EELE. Ser-199 carries the phosphoserine modification. Acidic residues predominate over residues 347 to 377; the sequence is GDDDDDEDEDDEDYGNEKEEEETDNSEEELE. Residues 358 to 433 are a coiled coil; the sequence is EDYGNEKEEE…QKELLRKVEN (76 aa).

It belongs to the TAF7 family. TFIID is composed of TATA binding protein (TBP) and a number of TBP-associated factors (TAFs). TAF7L may replace TAF7 in a spermatogenesis-specific form of TFIID. Interacts with TBP; the interaction occurs in a sub-population of cells (pachytene and haploid round spermatids) and is developmentally regulated through differential intracellular localization of the two proteins. Interacts with TAF1. In terms of tissue distribution, testis-specific (at protein level). Expressed during spermatogenesis from spermatogonia stage up to the stage of round spermatids.

It localises to the nucleus. It is found in the cytoplasm. In terms of biological role, probably functions as a spermatogenesis-specific component of the DNA-binding general transcription factor complex TFIID, a multimeric protein complex that plays a central role in mediating promoter responses to various activators and repressors. May play a role in spermatogenesis. The sequence is that of Transcription initiation factor TFIID subunit 7-like (Taf7l) from Mus musculus (Mouse).